The chain runs to 163 residues: Transcription elongation factor GreB (163 aa).

Positions 54-76 (GKRRMREIDRRIRFLTKRLEAAV) form a coiled coil.

Belongs to the GreA/GreB family. GreB subfamily.

Functionally, necessary for efficient RNA polymerase transcription elongation past template-encoded arresting sites. The arresting sites in DNA have the property of trapping a certain fraction of elongating RNA polymerases that pass through, resulting in locked ternary complexes. Cleavage of the nascent transcript by cleavage factors such as GreA or GreB allows the resumption of elongation from the new 3'terminus. GreB releases sequences of up to 9 nucleotides in length. This chain is Transcription elongation factor GreB, found in Neisseria meningitidis serogroup A / serotype 4A (strain DSM 15465 / Z2491).